The chain runs to 371 residues: Chemerin-like receptor 1 (371 aa).

Over 1–39 (MEYDAYNDSGIYDDEYSDGFGYFVDLEEASPWEAKVAPV) the chain is Extracellular. Asparagine 7 carries N-linked (GlcNAc...) asparagine glycosylation. Residues 40 to 62 (FLVVIYSLVCFLGLLGNGLVIVI) traverse the membrane as a helical segment. Topologically, residues 63-73 (ATFKMKKTVNT) are cytoplasmic. The helical transmembrane segment at 74–95 (VWFVNLAVADFLFNIFLPMHIT) threads the bilayer. Over 96–112 (YAAMDYHWVFGKAMCKI) the chain is Extracellular. An intrachain disulfide couples cysteine 110 to cysteine 187. The helical transmembrane segment at 113-133 (SNFLLSHNMYTSVFLLTVISF) threads the bilayer. Residues 134 to 152 (DRCISVLLPVWSQNHRSIR) lie on the Cytoplasmic side of the membrane. A helical membrane pass occupies residues 153–174 (LAYMTCSAVWVLAFFLSSPSLV). At 175-222 (FRDTANIHGKITCFNNFSLAAPESSPHPAHSQVVSTGYSRHVAVTVTR) the chain is on the extracellular side. Asparagine 190 is a glycosylation site (N-linked (GlcNAc...) asparagine). Residues 223 to 243 (FLCGFLIPVFIITACYLTIVF) form a helical membrane-spanning segment. Topologically, residues 244 to 259 (KLQRNRLAKNKKPFKI) are cytoplasmic. The chain crosses the membrane as a helical span at residues 260–280 (IITIIITFFLCWCPYHTLYLL). Over 281-298 (ELHHTAVPSSVFSLGLPL) the chain is Extracellular. A helical membrane pass occupies residues 299–318 (ATAVAIANSCMNPILYVFMG). The Cytoplasmic segment spans residues 319–371 (HDFRKFKVALFSRLANALSEDTGPSSYPSHRSFTKMSSLNEKASVNEKETSTL). A Phosphoserine modification is found at serine 337. The residue at position 340 (threonine 340) is a Phosphothreonine. A phosphoserine mark is found at serine 347, serine 350, and serine 356. Residue threonine 370 is modified to Phosphothreonine.

Belongs to the chemokine-like receptor (CMKLR) family. Expressed in the differentiated adipocytes (at protein level). Ubiquitous. Highly expressed in adipose tissue and immature plasmacytoid dendritic cells (DCs) and at lower levels in myeloid DCs, macrophages, and NK cells. Expressed on macrophages isolated from different tissues, including peritoneal cavities, pleural cavities and spleen.

The protein localises to the cell membrane. Its function is as follows. Receptor for the chemoattractant adipokine chemerin/RARRES2 and for the omega-3 fatty acid derived molecule resolvin E1. Interaction with RARRES2 initiates activation of G proteins G(i)/G(o) and beta-arrestin pathways inducing cellular responses via second messenger pathways such as intracellular calcium mobilization, phosphorylation of MAP kinases MAPK1/MAPK3 (ERK1/2), TYRO3, MAPK14/P38MAPK and PI3K leading to multifunctional effects, like, reduction of immune responses, enhancing of adipogenesis and angionesis. Resolvin E1 down-regulates cytokine production in macrophages by reducing the activation of MAPK1/3 (ERK1/2) and NF-kappa-B. Positively regulates adipogenesis and adipocyte metabolism. This chain is Chemerin-like receptor 1 (Cmklr1), found in Mus musculus (Mouse).